The following is a 542-amino-acid chain: Glutamyl-tRNA(Gln) amidotransferase subunit B, mitochondrial (542 aa).

It belongs to the GatB/GatE family. GatB subfamily. In terms of assembly, subunit of the heterotrimeric GatFAB amidotransferase (AdT) complex, composed of A, B and F subunits.

It is found in the mitochondrion. The enzyme catalyses L-glutamyl-tRNA(Gln) + L-glutamine + ATP + H2O = L-glutaminyl-tRNA(Gln) + L-glutamate + ADP + phosphate + H(+). In terms of biological role, allows the formation of correctly charged Gln-tRNA(Gln) through the transamidation of misacylated Glu-tRNA(Gln) in the mitochondria. The reaction takes place in the presence of glutamine and ATP through an activated gamma-phospho-Glu-tRNA(Gln). The chain is Glutamyl-tRNA(Gln) amidotransferase subunit B, mitochondrial from Candida glabrata (strain ATCC 2001 / BCRC 20586 / JCM 3761 / NBRC 0622 / NRRL Y-65 / CBS 138) (Yeast).